A 193-amino-acid chain; its full sequence is Ion-translocating oxidoreductase complex subunit A (193 aa).

A run of 6 helical transmembrane segments spans residues 5–25 (ILLI…FLGL), 39–59 (IGMG…AYLV), 65–85 (IPLE…AVIV), 102–122 (LLGI…VALL), 134–154 (VLYG…FAAL), and 171–191 (SIAL…TGLV).

Belongs to the NqrDE/RnfAE family. The complex is composed of six subunits: RnfA, RnfB, RnfC, RnfD, RnfE and RnfG.

It localises to the cell inner membrane. In terms of biological role, part of a membrane-bound complex that couples electron transfer with translocation of ions across the membrane. In Actinobacillus pleuropneumoniae serotype 5b (strain L20), this protein is Ion-translocating oxidoreductase complex subunit A.